Consider the following 644-residue polypeptide: 3D-(3,5/4)-trihydroxycyclohexane-1,2-dione hydrolase (644 aa).

Residue glutamate 65 coordinates thiamine diphosphate. Positions 442-522 (SLPGDLQRMW…INVLLFDNSG (81 aa)) are thiamine pyrophosphate binding. Aspartate 493 and asparagine 520 together coordinate Mg(2+).

Belongs to the TPP enzyme family. Mg(2+) serves as cofactor. The cofactor is thiamine diphosphate.

The enzyme catalyses 3D-3,5/4-trihydroxycyclohexane-1,2-dione + H2O = 5-deoxy-D-glucuronate + H(+). It functions in the pathway polyol metabolism; myo-inositol degradation into acetyl-CoA; acetyl-CoA from myo-inositol: step 3/7. In terms of biological role, involved in the cleavage of the C1-C2 bond of 3D-(3,5/4)-trihydroxycyclohexane-1,2-dione (THcHDO) to yield 5-deoxy-glucuronate (5DG). This is 3D-(3,5/4)-trihydroxycyclohexane-1,2-dione hydrolase from Bacillus thuringiensis (strain Al Hakam).